Consider the following 753-residue polypeptide: 5-methyltetrahydropteroyltriglutamate--homocysteine methyltransferase (753 aa).

5-methyltetrahydropteroyltri-L-glutamate-binding positions include 17 to 20 (RELK) and lysine 117. L-homocysteine-binding positions include 431 to 433 (IGS) and glutamate 484. Residues 431-433 (IGS) and glutamate 484 each bind L-methionine. 5-methyltetrahydropteroyltri-L-glutamate-binding positions include 515–516 (RC) and tryptophan 561. Residue aspartate 599 participates in L-homocysteine binding. Aspartate 599 is an L-methionine binding site. Glutamate 605 serves as a coordination point for 5-methyltetrahydropteroyltri-L-glutamate. 3 residues coordinate Zn(2+): histidine 641, cysteine 643, and glutamate 665. Residue histidine 694 is the Proton donor of the active site. Residue cysteine 726 coordinates Zn(2+).

This sequence belongs to the vitamin-B12 independent methionine synthase family. Zn(2+) serves as cofactor.

The enzyme catalyses 5-methyltetrahydropteroyltri-L-glutamate + L-homocysteine = tetrahydropteroyltri-L-glutamate + L-methionine. The protein operates within amino-acid biosynthesis; L-methionine biosynthesis via de novo pathway; L-methionine from L-homocysteine (MetE route): step 1/1. Catalyzes the transfer of a methyl group from 5-methyltetrahydrofolate to homocysteine resulting in methionine formation. This is 5-methyltetrahydropteroyltriglutamate--homocysteine methyltransferase from Escherichia coli O9:H4 (strain HS).